The chain runs to 252 residues: Methylthioribulose-1-phosphate dehydratase (252 aa).

A substrate-binding site is contributed by cysteine 105. 2 residues coordinate Zn(2+): histidine 123 and histidine 125. Glutamate 151 functions as the Proton donor/acceptor in the catalytic mechanism. Residue histidine 208 participates in Zn(2+) binding.

Belongs to the aldolase class II family. MtnB subfamily. The cofactor is Zn(2+).

The protein localises to the cytoplasm. The enzyme catalyses 5-(methylsulfanyl)-D-ribulose 1-phosphate = 5-methylsulfanyl-2,3-dioxopentyl phosphate + H2O. Its pathway is amino-acid biosynthesis; L-methionine biosynthesis via salvage pathway; L-methionine from S-methyl-5-thio-alpha-D-ribose 1-phosphate: step 2/6. Functionally, catalyzes the dehydration of methylthioribulose-1-phosphate (MTRu-1-P) into 2,3-diketo-5-methylthiopentyl-1-phosphate (DK-MTP-1-P). The chain is Methylthioribulose-1-phosphate dehydratase from Sclerotinia sclerotiorum (strain ATCC 18683 / 1980 / Ss-1) (White mold).